Reading from the N-terminus, the 643-residue chain is Threonine--tRNA ligase (643 aa).

One can recognise a TGS domain in the interval 1 to 61 (MVAISLPDGS…TTDASVSLIT (61 aa)). The tract at residues 243 to 534 (DHRRVGQEMD…LIENCAGRFP (292 aa)) is catalytic. Residues Cys334, His385, and His511 each contribute to the Zn(2+) site.

The protein belongs to the class-II aminoacyl-tRNA synthetase family. As to quaternary structure, homodimer. It depends on Zn(2+) as a cofactor.

The protein resides in the cytoplasm. It catalyses the reaction tRNA(Thr) + L-threonine + ATP = L-threonyl-tRNA(Thr) + AMP + diphosphate + H(+). Its function is as follows. Catalyzes the attachment of threonine to tRNA(Thr) in a two-step reaction: L-threonine is first activated by ATP to form Thr-AMP and then transferred to the acceptor end of tRNA(Thr). Also edits incorrectly charged L-seryl-tRNA(Thr). The polypeptide is Threonine--tRNA ligase (Rhodospirillum rubrum (strain ATCC 11170 / ATH 1.1.1 / DSM 467 / LMG 4362 / NCIMB 8255 / S1)).